Consider the following 151-residue polypeptide: Large-conductance mechanosensitive channel (151 aa).

Transmembrane regions (helical) follow at residues 14–34, 38–58, and 86–106; these read VVDM…VNTL, VLMP…LYLI, and GLFL…FLLV.

Belongs to the MscL family. Homopentamer.

Its subcellular location is the cell inner membrane. Functionally, channel that opens in response to stretch forces in the membrane lipid bilayer. May participate in the regulation of osmotic pressure changes within the cell. The polypeptide is Large-conductance mechanosensitive channel (Pelodictyon phaeoclathratiforme (strain DSM 5477 / BU-1)).